We begin with the raw amino-acid sequence, 398 residues long: Mu-type opioid receptor (398 aa).

At 1–66 (MDSSTGPGNT…CPQTGSPSMV (66 aa)) the chain is on the extracellular side. N-linked (GlcNAc...) asparagine glycans are attached at residues asparagine 9, asparagine 31, asparagine 38, asparagine 46, and asparagine 53. The chain crosses the membrane as a helical span at residues 67 to 91 (TAITIMALYSIVCVVGLFGNFLVMY). Residues 92–104 (VIVRYTKMKTATN) are Cytoplasmic-facing. A helical transmembrane segment spans residues 105–129 (IYIFNLALADALATSTLPFQSVNYL). Residues 130–140 (MGTWPFGTILC) are Extracellular-facing. Cysteine 140 and cysteine 217 are disulfide-bonded. The chain crosses the membrane as a helical span at residues 141-163 (KIVISIDYYNMFTSIFTLCTMSV). Residues 164 to 183 (DRYIAVCHPVKALDFRTPRN) are Cytoplasmic-facing. Tyrosine 166 is modified (phosphotyrosine). The chain crosses the membrane as a helical span at residues 184–205 (AKIVNVCNWILSSAIGLPVMFM). Residues 206 to 228 (ATTKYRQGSIDCTLTFSHPTWYW) are Extracellular-facing. Residues 229 to 253 (ENLLKICVFIFAFIMPVLIITVCYG) traverse the membrane as a helical segment. Residues 254-277 (LMILRLKSVRMLSGSKEKDRNLRR) lie on the Cytoplasmic side of the membrane. The chain crosses the membrane as a helical span at residues 278 to 304 (ITRMVLVVVAVFIVCWTPIHIYVIIKA). The Extracellular segment spans residues 305 to 312 (LITIPETT). A helical transmembrane segment spans residues 313–336 (FQTVSWHFCIALGYTNSCLNPVLY). The NPxxY; plays a role in stabilizing the activated conformation of the receptor motif lies at 332 to 336 (NPVLY). Topologically, residues 337–398 (AFLDENFKRC…NLEAETAPLP (62 aa)) are cytoplasmic. The S-palmitoyl cysteine moiety is linked to residue cysteine 351. A disordered region spans residues 361–385 (QNSTRVRQNTREHPSTANTVDRTNH). Serine 363 carries the phosphoserine modification. Threonine 370 bears the Phosphothreonine mark. Phosphoserine is present on serine 375. Position 394 is a phosphothreonine (threonine 394).

This sequence belongs to the G-protein coupled receptor 1 family. As to quaternary structure, forms homooligomers and heterooligomers with other GPCRs, such as OPRD1, OPRK1, OPRL1, NPFFR2, ADRA2A, SSTR2, CNR1 and CCR5 (probably in dimeric forms). Interacts with heterotrimeric G proteins; interaction with a heterotrimeric complex containing GNAI1, GNB1 and GNG2 stabilizes the active conformation of the receptor and increases its affinity for endomorphin-2, the synthetic opioid peptide DAMGO and for morphinan agonists. Interacts with PPL; the interaction disrupts agonist-mediated G-protein activation. Interacts (via C-terminus) with DNAJB4 (via C-terminus). Interacts with calmodulin; the interaction inhibits the constitutive activity of OPRM1; it abolishes basal and attenuates agonist-stimulated G-protein coupling. Interacts with FLNA, PLD2, RANBP9 and WLS and GPM6A. Interacts with RTP4. Interacts with SYP and GNAS. Interacts with RGS9, RGS17, RGS20, RGS4, PPP1R9B and HINT1. Post-translationally, phosphorylated. Differentially phosphorylated in basal and agonist-induced conditions. Agonist-mediated phosphorylation modulates receptor internalization. Phosphorylated by GRK2 in a agonist-dependent manner. Phosphorylation at Tyr-166 requires receptor activation, is dependent on non-receptor protein tyrosine kinase Src and results in a decrease in agonist efficacy by reducing G-protein coupling efficiency. Phosphorylated on tyrosine residues; the phosphorylation is involved in agonist-induced G-protein-independent receptor down-regulation. Phosphorylation at Ser-375 is involved in G-protein-dependent but not beta-arrestin-dependent activation of the ERK pathway. Ubiquitinated. A basal ubiquitination seems not to be related to degradation. Ubiquitination is increased upon formation of OPRM1:OPRD1 oligomers leading to proteasomal degradation; the ubiquitination is diminished by RTP4. As to expression, brain. Is expressed in the cerebral cortex, caudate putamen, nucleus accumbens, septal nuclei, thalamus, hippocampus, and habenula. Not detected in cerebellum.

The protein localises to the cell membrane. Its subcellular location is the cell projection. The protein resides in the axon. It is found in the perikaryon. It localises to the dendrite. The protein localises to the endosome. Its function is as follows. Receptor for endogenous opioids such as beta-endorphin and endomorphin. Receptor for natural and synthetic opioids including morphine, heroin, DAMGO, fentanyl, etorphine, buprenorphin and methadone. Also activated by enkephalin peptides, such as Met-enkephalin or Met-enkephalin-Arg-Phe, with higher affinity for Met-enkephalin-Arg-Phe. Agonist binding to the receptor induces coupling to an inactive GDP-bound heterotrimeric G-protein complex and subsequent exchange of GDP for GTP in the G-protein alpha subunit leading to dissociation of the G-protein complex with the free GTP-bound G-protein alpha and the G-protein beta-gamma dimer activating downstream cellular effectors. The agonist- and cell type-specific activity is predominantly coupled to pertussis toxin-sensitive G(i) and G(o) G alpha proteins, GNAI1, GNAI2, GNAI3 and GNAO1 isoforms Alpha-1 and Alpha-2, and to a lesser extent to pertussis toxin-insensitive G alpha proteins GNAZ and GNA15. They mediate an array of downstream cellular responses, including inhibition of adenylate cyclase activity and both N-type and L-type calcium channels, activation of inward rectifying potassium channels, mitogen-activated protein kinase (MAPK), phospholipase C (PLC), phosphoinositide/protein kinase (PKC), phosphoinositide 3-kinase (PI3K) and regulation of NF-kappa-B. Also couples to adenylate cyclase stimulatory G alpha proteins. The selective temporal coupling to G-proteins and subsequent signaling can be regulated by RGSZ proteins, such as RGS9, RGS17 and RGS4. Phosphorylation by members of the GPRK subfamily of Ser/Thr protein kinases and association with beta-arrestins is involved in short-term receptor desensitization. Beta-arrestins associate with the GPRK-phosphorylated receptor and uncouple it from the G-protein thus terminating signal transduction. The phosphorylated receptor is internalized through endocytosis via clathrin-coated pits which involves beta-arrestins. The activation of the ERK pathway occurs either in a G-protein-dependent or a beta-arrestin-dependent manner and is regulated by agonist-specific receptor phosphorylation. Acts as a class A G-protein coupled receptor (GPCR) which dissociates from beta-arrestin at or near the plasma membrane and undergoes rapid recycling. Receptor down-regulation pathways are varying with the agonist and occur dependent or independent of G-protein coupling. Endogenous ligands induce rapid desensitization, endocytosis and recycling. Heterooligomerization with other GPCRs can modulate agonist binding, signaling and trafficking properties. This Rattus norvegicus (Rat) protein is Mu-type opioid receptor (Oprm1).